Reading from the N-terminus, the 662-residue chain is UvrABC system protein B (662 aa).

Residues 25–182 (KGIEKREKFQ…KKLVEIQYER (158 aa)) enclose the Helicase ATP-binding domain. ATP is bound at residue 38–45 (GVTGSGKT). The Beta-hairpin signature appears at 91–114 (YYDYYQPEAYVAQSDTYIEKDASI). In terms of domain architecture, Helicase C-terminal spans 429–595 (QIDDLYTSIQ…TIIKDIREVI (167 aa)). Residues 622–657 (DKLIEKYEEEMKEAAQNLQFEKAAHLRDVIYKLKKD) enclose the UVR domain.

This sequence belongs to the UvrB family. Forms a heterotetramer with UvrA during the search for lesions. Interacts with UvrC in an incision complex.

It localises to the cytoplasm. The UvrABC repair system catalyzes the recognition and processing of DNA lesions. A damage recognition complex composed of 2 UvrA and 2 UvrB subunits scans DNA for abnormalities. Upon binding of the UvrA(2)B(2) complex to a putative damaged site, the DNA wraps around one UvrB monomer. DNA wrap is dependent on ATP binding by UvrB and probably causes local melting of the DNA helix, facilitating insertion of UvrB beta-hairpin between the DNA strands. Then UvrB probes one DNA strand for the presence of a lesion. If a lesion is found the UvrA subunits dissociate and the UvrB-DNA preincision complex is formed. This complex is subsequently bound by UvrC and the second UvrB is released. If no lesion is found, the DNA wraps around the other UvrB subunit that will check the other stand for damage. The chain is UvrABC system protein B from Clostridium botulinum (strain Kyoto / Type A2).